The following is a 400-amino-acid chain: Tryptophan synthase beta chain (400 aa).

Residue K92 is modified to N6-(pyridoxal phosphate)lysine.

This sequence belongs to the TrpB family. As to quaternary structure, tetramer of two alpha and two beta chains. Pyridoxal 5'-phosphate is required as a cofactor.

The enzyme catalyses (1S,2R)-1-C-(indol-3-yl)glycerol 3-phosphate + L-serine = D-glyceraldehyde 3-phosphate + L-tryptophan + H2O. The protein operates within amino-acid biosynthesis; L-tryptophan biosynthesis; L-tryptophan from chorismate: step 5/5. Functionally, the beta subunit is responsible for the synthesis of L-tryptophan from indole and L-serine. This is Tryptophan synthase beta chain from Chromobacterium violaceum (strain ATCC 12472 / DSM 30191 / JCM 1249 / CCUG 213 / NBRC 12614 / NCIMB 9131 / NCTC 9757 / MK).